The following is a 222-amino-acid chain: Protein CicA (222 aa).

This is Protein CicA (cicA) from Caulobacter vibrioides (strain ATCC 19089 / CIP 103742 / CB 15) (Caulobacter crescentus).